Here is a 436-residue protein sequence, read N- to C-terminus: MRNVGIISLGCPKNSVDSEKMLALLKEKGYNIVNDEKKADVIIINTCAFIEDAKKESIEYIIQMGELKKKRLKYLIATGCLSERYNKELIKELPELDAVIGTGDFTQIVDVIEEVKKGKKVLKYGHPDLLNDEGIPRILTTPPYYAYLKIAEGCSNACSFCIIPKLRGKYKSRKMENIIEEAQELARKGVKELIIIAQDTTKYGIDLYKKLMLPQLLRELSKIEELKWIRLLYAYPDSVTDELIEEIKNNQKIVKYIDIPLQHSSESVLKRMNRGTTRRKIEEVISKLRSIPGMVMRTTFMVGFPGETEEEFEDLKNFIKEKRFERVGVFTYSREEGTKSYYMKPQIRKKVKLKRQEELMEIQKQISYEFNMSKIGTKLEVLIEGFEDGVYYGRSYMDAPEIDGLVYVRSDKKLFPGDFVTVTVVDAFEYDLVGEY.

In terms of domain architecture, MTTase N-terminal spans 2-117; it reads RNVGIISLGC…IVDVIEEVKK (116 aa). Cys-11, Cys-47, Cys-80, Cys-154, Cys-158, and Cys-161 together coordinate [4Fe-4S] cluster. Positions 140–369 constitute a Radical SAM core domain; it reads TTPPYYAYLK…MEIQKQISYE (230 aa). Residues 372-436 form the TRAM domain; sequence MSKIGTKLEV…AFEYDLVGEY (65 aa).

The protein belongs to the methylthiotransferase family. RimO subfamily. [4Fe-4S] cluster serves as cofactor.

It localises to the cytoplasm. It catalyses the reaction L-aspartate(89)-[ribosomal protein uS12]-hydrogen + (sulfur carrier)-SH + AH2 + 2 S-adenosyl-L-methionine = 3-methylsulfanyl-L-aspartate(89)-[ribosomal protein uS12]-hydrogen + (sulfur carrier)-H + 5'-deoxyadenosine + L-methionine + A + S-adenosyl-L-homocysteine + 2 H(+). In terms of biological role, catalyzes the methylthiolation of an aspartic acid residue of ribosomal protein uS12. The protein is Ribosomal protein uS12 methylthiotransferase RimO of Caldanaerobacter subterraneus subsp. tengcongensis (strain DSM 15242 / JCM 11007 / NBRC 100824 / MB4) (Thermoanaerobacter tengcongensis).